The primary structure comprises 80 residues: Serine palmitoyltransferase small subunit A-B (80 aa).

The Cytoplasmic segment spans residues 1–21; that stretch reads MKVSCEDVNGPRSSLGRAWNH. Residues 22 to 38 form a helical membrane-spanning segment; the sequence is VSWLYYQYLLVTALYML. At 39–43 the chain is on the lumenal side; the sequence is EPWER. Residues 44 to 66 form a helical membrane-spanning segment; that stretch reads TVFNSMLVSIVGMALYTGYIFMP. Residues 67-80 are Cytoplasmic-facing; the sequence is QHILAILHYFEIVQ.

Belongs to the SPTSS family. SPTSSA subfamily. As to quaternary structure, component of the serine palmitoyltransferase (SPT) complex, which is composed of SPTLC1, SPTLC2 or SPTLC3 and SPTSSA or SPTSSB. The heterodimer consisting of SPTLC1 and SPTLC2/SPTLC3 forms the catalytic core of the enzyme, while SPTSSA or SPTSSB subunits determine substrate specificity. SPT also interacts with ORMDL proteins, especially ORMDL3, which negatively regulate SPT activity in the presence of ceramides.

Its subcellular location is the endoplasmic reticulum membrane. It participates in lipid metabolism; sphingolipid metabolism. Functionally, component of the serine palmitoyltransferase multisubunit enzyme (SPT) that catalyzes the initial and rate-limiting step in sphingolipid biosynthesis by condensing L-serine and activated acyl-CoA (most commonly palmitoyl-CoA) to form long-chain bases. The SPT complex is composed of SPTLC1, SPTLC2 or SPTLC3 and SPTSSA or SPTSSB. Within this complex, the heterodimer consisting of SPTLC1 and SPTLC2/SPTLC3 forms the catalytic core. Within the SPT complex, SPTSSA stimulates the catalytic activity and plays a role in substrate specificity, which depends upon the overall complex composition. The SPTLC1-SPTLC2-SPTSSA complex shows a strong preference for C16-CoA substrate, while the SPTLC1-SPTLC3-SPTSSA isozyme uses both C14-CoA and C16-CoA as substrates, with a slight preference for C14-CoA. Independently of its action as a SPT component, may be involved in MBOAT7 localization to mitochondria-associated membranes, a membrane bridge between the endoplasmic reticulum and mitochondria, may hence affect MBOAT7-catalyzed incorporation of arachidonic acid into phosphatidylinositol. This chain is Serine palmitoyltransferase small subunit A-B (sptssa-b), found in Xenopus laevis (African clawed frog).